The sequence spans 71 residues: uncharacterized protein (71 aa).

The segment at Glu-23–Ile-71 is disordered. Residues Gly-52–Ile-71 show a composition bias toward basic and acidic residues.

This is an uncharacterized protein from Caenorhabditis elegans.